The following is a 448-amino-acid chain: Eukaryotic translation initiation factor 3 subunit E (448 aa).

Positions 254 to 423 (TDLFFSPAYI…GTVIMNHPPQ (170 aa)) constitute a PCI domain.

This sequence belongs to the eIF-3 subunit E family. As to quaternary structure, component of the eukaryotic translation initiation factor 3 (eIF-3) complex.

Its subcellular location is the cytoplasm. In terms of biological role, component of the eukaryotic translation initiation factor 3 (eIF-3) complex, which is involved in protein synthesis of a specialized repertoire of mRNAs and, together with other initiation factors, stimulates binding of mRNA and methionyl-tRNAi to the 40S ribosome. The eIF-3 complex specifically targets and initiates translation of a subset of mRNAs involved in cell proliferation. The protein is Eukaryotic translation initiation factor 3 subunit E (int6) of Emericella nidulans (strain FGSC A4 / ATCC 38163 / CBS 112.46 / NRRL 194 / M139) (Aspergillus nidulans).